A 1003-amino-acid polypeptide reads, in one-letter code: Leucine-rich repeat receptor-like serine/threonine-protein kinase BAM1 (1003 aa).

A signal peptide spans 1 to 19; sequence MKLFLLLLFLLHISHTFTA. Residues 20–640 lie on the Extracellular side of the membrane; sequence SRPISEFRAL…HSKGPLSASM (621 aa). LRR repeat units follow at residues 68–92, 93–116, 117–140, 142–165, 166–191, 193–213, 215–238, 239–262, 263–285, 286–310, 312–334, 335–358, 359–382, 385–406, 407–430, 432–454, 455–480, 482–502, 503–526, 527–550, 551–574, and 575–598; these read RRHV…VSHL, RLLQ…ISSL, SGLR…ISSG, VNLR…VTNL, TQLR…SWPV, EYLA…IGNL, TLRE…IGNL, SELV…IGKL, QKLD…ELGT, LSSL…FAEL, NLTL…IGDL, PELE…LGEN, GKLN…MCSG, LETL…LGKC, ESLT…LFGL, KLTQ…GGVS, VNLG…NFTG, QKLL…VGKL, QQLS…ISRC, KLLT…ITAM, KILN…ISSM, and QSLT…GQFS. 6 N-linked (GlcNAc...) asparagine glycosylation sites follow: Asn80, Asn97, Asn123, Asn130, Asn153, and Asn164. 2 N-linked (GlcNAc...) asparagine glycosylation sites follow: Asn212 and Asn237. N-linked (GlcNAc...) asparagine glycans are attached at residues Asn312 and Asn346. A glycan (N-linked (GlcNAc...) asparagine) is linked at Asn420. The N-linked (GlcNAc...) asparagine glycan is linked to Asn477. N-linked (GlcNAc...) asparagine glycosylation is found at Asn557, Asn586, and Asn601. The helical transmembrane segment at 641–661 threads the bilayer; that stretch reads KLLLVLGLLVCSIAFAVVAII. Over 662-1003 the chain is Cytoplasmic; sequence KARSLKKASE…VQSPPDLLNL (342 aa). Position 686 is a phosphothreonine (Thr686). Residues 694-971 form the Protein kinase domain; sequence LKEDNIIGKG…VQILTEIPKL (278 aa). ATP contacts are provided by residues 700–708 and Lys722; that span reads IGKGGAGIV. A phosphotyrosine mark is found at Tyr769 and Tyr807. Residue Asp820 is the Proton acceptor of the active site. Residue Ser855 is modified to Phosphoserine. 2 positions are modified to phosphotyrosine: Tyr863 and Tyr870. A Phosphothreonine modification is found at Thr871. Residues 969 to 1003 form a disordered region; that stretch reads PKLPPSKDQPMTESAPESELSPKSGVQSPPDLLNL. The residue at position 996 (Ser996) is a Phosphoserine.

Belongs to the protein kinase superfamily. Ser/Thr protein kinase family. As to quaternary structure, self-interacts and interacts with BAM2 and CLV1. Binds to the CLV3, CLE5, CLE11, CLE18, CLE19, CLE22, CLE25, CLE26, CLE40, CLE41 and CLE42 mature peptides, probably via its extracellular leucine-rich repeat region. As to expression, expressed in seedlings, roots, leaves, inflorescences, flowers and siliques.

The protein resides in the cell membrane. The catalysed reaction is L-seryl-[protein] + ATP = O-phospho-L-seryl-[protein] + ADP + H(+). The enzyme catalyses L-threonyl-[protein] + ATP = O-phospho-L-threonyl-[protein] + ADP + H(+). Its function is as follows. Necessary for male gametophyte development, as well as ovule specification and function. Involved in cell-cell communication process required during early anther development, and regulating cell division and differentiation to organize cell layers. Required for the development of high-ordered vascular strands within the leaf and a correlated control of leaf shape, size and symmetry. May regulate the CLV1-dependent CLV3-mediated signaling in meristems maintenance. This chain is Leucine-rich repeat receptor-like serine/threonine-protein kinase BAM1 (BAM1), found in Arabidopsis thaliana (Mouse-ear cress).